The primary structure comprises 130 residues: Small ribosomal subunit protein uS8 (130 aa).

The protein belongs to the universal ribosomal protein uS8 family. In terms of assembly, part of the 30S ribosomal subunit. Contacts proteins S5 and S12.

Functionally, one of the primary rRNA binding proteins, it binds directly to 16S rRNA central domain where it helps coordinate assembly of the platform of the 30S subunit. The sequence is that of Small ribosomal subunit protein uS8 from Pasteurella multocida (strain Pm70).